The chain runs to 423 residues: Gamma-glutamyl phosphate reductase (423 aa).

It belongs to the gamma-glutamyl phosphate reductase family.

The protein resides in the cytoplasm. The enzyme catalyses L-glutamate 5-semialdehyde + phosphate + NADP(+) = L-glutamyl 5-phosphate + NADPH + H(+). It participates in amino-acid biosynthesis; L-proline biosynthesis; L-glutamate 5-semialdehyde from L-glutamate: step 2/2. In terms of biological role, catalyzes the NADPH-dependent reduction of L-glutamate 5-phosphate into L-glutamate 5-semialdehyde and phosphate. The product spontaneously undergoes cyclization to form 1-pyrroline-5-carboxylate. This is Gamma-glutamyl phosphate reductase from Magnetococcus marinus (strain ATCC BAA-1437 / JCM 17883 / MC-1).